A 480-amino-acid chain; its full sequence is Flap endonuclease 1 (480 aa).

Residues 1 to 106 form an N-domain region; it reads MGIKGLTKFI…SELEKRGEKR (106 aa). Asp-34 contacts Mg(2+). Positions 47 and 72 each coordinate DNA. Residues Asp-88, Glu-160, Glu-162, Asp-181, and Asp-183 each coordinate Mg(2+). The I-domain stretch occupies residues 124 to 266; that stretch reads EIKKQSGRTV…KTAYNLIKEY (143 aa). Residue Glu-160 participates in DNA binding. Residues Gly-244 and Asp-246 each contribute to the DNA site. Asp-246 contributes to the Mg(2+) binding site. The segment at 349 to 357 is interaction with PCNA; it reads TQRRLDTFF. The interval 379–461 is disordered; it reads TKGKGKKREI…NIKNENVKED (83 aa). Positions 404–428 are enriched in basic and acidic residues; it reads NVKDEKKNNEKVDELKNKSDENLVK. Positions 429-438 are enriched in acidic residues; that stretch reads DEEDDQDDYD.

This sequence belongs to the XPG/RAD2 endonuclease family. FEN1 subfamily. As to quaternary structure, interacts with PCNA. Three molecules of FEN1 bind to one PCNA trimer with each molecule binding to one PCNA monomer. PCNA stimulates the nuclease activity without altering cleavage specificity. It depends on Mg(2+) as a cofactor. Post-translationally, phosphorylated. Phosphorylation upon DNA damage induces relocalization to the nuclear plasma.

The protein localises to the nucleus. It is found in the nucleolus. The protein resides in the nucleoplasm. Its subcellular location is the mitochondrion. With respect to regulation, inhibited by monovalent metal ions. Functionally, structure-specific nuclease with 5'-flap endonuclease and 5'-3' exonuclease activities involved in DNA replication and repair. During DNA replication, cleaves the 5'-overhanging flap structure that is generated by displacement synthesis when DNA polymerase encounters the 5'-end of a downstream Okazaki fragment. It enters the flap from the 5'-end and then tracks to cleave the flap base, leaving a nick for ligation. Also involved in the long patch base excision repair (LP-BER) pathway, by cleaving within the apurinic/apyrimidinic (AP) site-terminated flap. Acts as a genome stabilization factor that prevents flaps from equilibrating into structures that lead to duplications and deletions. Also possesses 5'-3' exonuclease activity on nicked or gapped double-stranded DNA, and exhibits RNase H activity. Also involved in replication and repair of rDNA and in repairing mitochondrial DNA. The chain is Flap endonuclease 1 from Plasmodium yoelii yoelii.